A 403-amino-acid polypeptide reads, in one-letter code: Tryptophan 2,3-dioxygenase (403 aa).

Residue 69 to 73 (FIVIH) participates in substrate binding. Residues 133 to 135 (PLD) carry the PLD motif; required for enzymatic activity motif. Substrate is bound at residue Arg140. Residue His327 coordinates heme. Residue Thr341 coordinates substrate.

It belongs to the tryptophan 2,3-dioxygenase family. Homotetramer. Dimer of dimers. It depends on heme as a cofactor. In terms of tissue distribution, expressed in body wall muscle cells, hypodermis, PLM neurons and touch-receptor neurons.

It catalyses the reaction L-tryptophan + O2 = N-formyl-L-kynurenine. It functions in the pathway amino-acid degradation; L-tryptophan degradation via kynurenine pathway; L-kynurenine from L-tryptophan: step 1/2. Heme-dependent dioxygenase that catalyzes the oxidative cleavage of the L-tryptophan (L-Trp) pyrrole ring and converts L-tryptophan to N-formyl-L-kynurenine. Catalyzes the oxidative cleavage of the indole moiety. Involved in regulation of protein homeostasis, longevity and reproducive life span. Specifically regulates proteotoxicity due to age-related aggregation of proteins like alpha-synuclein, via its effects on tryptophan metabolism. The chain is Tryptophan 2,3-dioxygenase from Caenorhabditis elegans.